Reading from the N-terminus, the 271-residue chain is Ribosomal RNA small subunit methyltransferase A (271 aa).

H14, L16, G41, E63, D89, and N107 together coordinate S-adenosyl-L-methionine.

The protein belongs to the class I-like SAM-binding methyltransferase superfamily. rRNA adenine N(6)-methyltransferase family. RsmA subfamily.

The protein localises to the cytoplasm. It catalyses the reaction adenosine(1518)/adenosine(1519) in 16S rRNA + 4 S-adenosyl-L-methionine = N(6)-dimethyladenosine(1518)/N(6)-dimethyladenosine(1519) in 16S rRNA + 4 S-adenosyl-L-homocysteine + 4 H(+). Functionally, specifically dimethylates two adjacent adenosines (A1518 and A1519) in the loop of a conserved hairpin near the 3'-end of 16S rRNA in the 30S particle. May play a critical role in biogenesis of 30S subunits. This is Ribosomal RNA small subunit methyltransferase A from Lawsonia intracellularis (strain PHE/MN1-00).